Consider the following 213-residue polypeptide: StAR-related lipid transfer protein 5 (213 aa).

The START domain occupies 1-213 (MDPALAAQMS…LQKAVKQFHE (213 aa)).

Functionally, may be involved in the intracellular transport of sterols or other lipids. May bind cholesterol or other sterols. This chain is StAR-related lipid transfer protein 5 (STARD5), found in Homo sapiens (Human).